The primary structure comprises 361 residues: Fructose-bisphosphate aldolase (361 aa).

Ser-63 provides a ligand contact to D-glyceraldehyde 3-phosphate. Residue Asp-110 is the Proton donor of the active site. Zn(2+)-binding residues include His-111, Asp-145, Glu-175, and His-227. Gly-228 is a binding site for dihydroxyacetone phosphate. His-266 is a binding site for Zn(2+). Dihydroxyacetone phosphate-binding positions include 267-269 (GGS) and 288-291 (NLDT).

It belongs to the class II fructose-bisphosphate aldolase family. Homodimer. Requires Zn(2+) as cofactor.

The catalysed reaction is beta-D-fructose 1,6-bisphosphate = D-glyceraldehyde 3-phosphate + dihydroxyacetone phosphate. Its pathway is carbohydrate degradation; glycolysis; D-glyceraldehyde 3-phosphate and glycerone phosphate from D-glucose: step 4/4. In terms of biological role, catalyzes the aldol condensation of dihydroxyacetone phosphate (DHAP or glycerone-phosphate) with glyceraldehyde 3-phosphate (G3P) to form fructose 1,6-bisphosphate (FBP) in gluconeogenesis and the reverse reaction in glycolysis. The polypeptide is Fructose-bisphosphate aldolase (FBA1) (Kluyveromyces lactis (strain ATCC 8585 / CBS 2359 / DSM 70799 / NBRC 1267 / NRRL Y-1140 / WM37) (Yeast)).